The primary structure comprises 216 residues: Soluble inorganic pyrophosphatase 4 (216 aa).

At Ser-18 the chain carries Phosphoserine. Substrate is bound by residues Lys-66 and Arg-80. The Proton donor role is filled by Tyr-88. Tyr-92 provides a ligand contact to substrate. Residues Asp-102, Asp-107, and Asp-139 each coordinate Mg(2+). Tyr-176 contacts substrate.

It belongs to the PPase family. In terms of assembly, monomer. Mg(2+) serves as cofactor. In terms of tissue distribution, ubiquitous, excepted in pollen. Very low expression in cork, xylem and hypocotyls.

It is found in the cytoplasm. It carries out the reaction diphosphate + H2O = 2 phosphate + H(+). Inhibited by Zn(2+), Ca(2+), Ba(2+), Fe(2+), Co(2+), Cu(2+), Eu(2+), Eu(3+) and Mn(2+). Catalyzes the irreversible hydrolysis of pyrophosphate (PPi) to phosphate. The MgPPi(2-) complex binds to the enzyme only after a free Mg(2+) ion has bound. No activity with glycerol-3-phosphate, glucose-6-phosphate, p-nitrophenylphosphate, ADP, NADP(+), NAD(+),NADH, NADPH or phosphoribosyl pyrophosphate as substrates. This Arabidopsis thaliana (Mouse-ear cress) protein is Soluble inorganic pyrophosphatase 4.